We begin with the raw amino-acid sequence, 179 residues long: UPF0227 protein SO_2251 (179 aa).

It belongs to the UPF0227 family.

This Shewanella oneidensis (strain ATCC 700550 / JCM 31522 / CIP 106686 / LMG 19005 / NCIMB 14063 / MR-1) protein is UPF0227 protein SO_2251.